Reading from the N-terminus, the 508-residue chain is MTISLFAIRDCLEKEDLLKEFISPEGWHLTLSDTLGQREVTALSYDSRDVTAETLFFCKGLNFKEIYLENAVKDGLEIYVSEVPYEVPAQLGIIVTDIKKAMAVLSMAFYDYPQNKLKLIGFTGTKGKTTAAYFTKYILDVATQQKTALLSTMNSTLDGKTFFKSALTTPESLDLYRMMATAVANGMTHFIMEVSSQAYKTNRVYKLFFDVGIFLNITPDHISPIEHPTFDDYFYCKRQLITHSKVIVLNHEADYFPLLKETAQQQKVPAIVYGSQPAPEVDYSFAVSSEDSLRFIVESPADALGLAGSYHLRLGGDFNKGNALSAAIASVLVGASKEECQQGIAATTVPGRMESLTNTNGATVYVDYAHNYDSLKNLLTFVREEHPDGRLIVLVGSTGDKAISRRKDFGRVLSELADVAVLTTDDPASEDPAKICQEIQAHITKEMPVYTVLDRGEAIAHALSLSTTADDAIVLAGKGADLYQKVNGVDEPYAGDFALAEAFINKKN.

Ser47 lines the UDP-N-acetyl-alpha-D-muramoyl-L-alanyl-D-glutamate pocket. 124-130 (GTKGKTT) contributes to the ATP binding site. UDP-N-acetyl-alpha-D-muramoyl-L-alanyl-D-glutamate contacts are provided by residues 168–169 (TT), Ser195, and Arg203. Lys237 carries the post-translational modification N6-carboxylysine. Positions 425–428 (DDPA) match the L-lysine recognition motif motif.

Belongs to the MurCDEF family. MurE subfamily. In terms of processing, carboxylation is probably crucial for Mg(2+) binding and, consequently, for the gamma-phosphate positioning of ATP.

The protein localises to the cytoplasm. It carries out the reaction UDP-N-acetyl-alpha-D-muramoyl-L-alanyl-D-glutamate + L-lysine + ATP = UDP-N-acetyl-alpha-D-muramoyl-L-alanyl-gamma-D-glutamyl-L-lysine + ADP + phosphate + H(+). It participates in cell wall biogenesis; peptidoglycan biosynthesis. In terms of biological role, catalyzes the addition of L-lysine to the nucleotide precursor UDP-N-acetylmuramoyl-L-alanyl-D-glutamate (UMAG) in the biosynthesis of bacterial cell-wall peptidoglycan. In Enterococcus faecalis (strain ATCC 700802 / V583), this protein is UDP-N-acetylmuramoyl-L-alanyl-D-glutamate--L-lysine ligase.